Consider the following 663-residue polypeptide: Translation factor guf1, mitochondrial (663 aa).

The N-terminal 51 residues, 1 to 51 (MRGCLQVLRWLSTSTARRPVSSRPLHEIFPKSEFRRPFTSTILRQAQASRN), are a transit peptide targeting the mitochondrion. The 181-residue stretch at 65–245 (ERFRNFCIVA…TVIERIPAPV (181 aa)) folds into the tr-type G domain. GTP is bound by residues 74 to 81 (AHVDHGKS), 138 to 142 (DTPGH), and 192 to 195 (NKVD).

The protein belongs to the TRAFAC class translation factor GTPase superfamily. Classic translation factor GTPase family. LepA subfamily.

The protein resides in the mitochondrion inner membrane. It carries out the reaction GTP + H2O = GDP + phosphate + H(+). Its function is as follows. Promotes mitochondrial protein synthesis. May act as a fidelity factor of the translation reaction, by catalyzing a one-codon backward translocation of tRNAs on improperly translocated ribosomes. Binds to mitochondrial ribosomes in a GTP-dependent manner. In Talaromyces marneffei (strain ATCC 18224 / CBS 334.59 / QM 7333) (Penicillium marneffei), this protein is Translation factor guf1, mitochondrial (guf1).